Consider the following 321-residue polypeptide: Acetyl-coenzyme A carboxylase carboxyl transferase subunit alpha (321 aa).

Positions 39-293 (RLQQKSQNLA…RRALGDALRQ (255 aa)) constitute a CoA carboxyltransferase C-terminal domain.

The protein belongs to the AccA family. Acetyl-CoA carboxylase is a heterohexamer composed of biotin carboxyl carrier protein (AccB), biotin carboxylase (AccC) and two subunits each of ACCase subunit alpha (AccA) and ACCase subunit beta (AccD).

It localises to the cytoplasm. The catalysed reaction is N(6)-carboxybiotinyl-L-lysyl-[protein] + acetyl-CoA = N(6)-biotinyl-L-lysyl-[protein] + malonyl-CoA. It functions in the pathway lipid metabolism; malonyl-CoA biosynthesis; malonyl-CoA from acetyl-CoA: step 1/1. In terms of biological role, component of the acetyl coenzyme A carboxylase (ACC) complex. First, biotin carboxylase catalyzes the carboxylation of biotin on its carrier protein (BCCP) and then the CO(2) group is transferred by the carboxyltransferase to acetyl-CoA to form malonyl-CoA. This chain is Acetyl-coenzyme A carboxylase carboxyl transferase subunit alpha, found in Bordetella bronchiseptica (strain ATCC BAA-588 / NCTC 13252 / RB50) (Alcaligenes bronchisepticus).